Here is a 188-residue protein sequence, read N- to C-terminus: RxLR effector protein Avh241 (188 aa).

Positions 1–16 (MRQYCLLLIVLALAAA) are cleaved as a signal peptide. Residues 43–58 (RLLRSEPQDEDTFEDR) carry the RxLR-dEER motif. The Host plasma membrane localization motif motif lies at 73-78 (GAAKAK).

It belongs to the RxLR effector family.

The protein resides in the secreted. Its subcellular location is the host cell membrane. Effector that triggers cell death in a variety of plant species (including tobacco, tomato and soybean), regardless of the Rps genes present. Avh241 interacts with the plant immune system via at least two different mechanisms, one recognized by plants dependent on subcellular localization and one promoting infection independent on membrane localization. The cell death triggered by Avh241 in N.benthamiana requires the two host mitogen-activated protein kinases, MEK2 and WIPK. The chain is RxLR effector protein Avh241 from Phytophthora sojae (strain P6497) (Soybean stem and root rot agent).